Reading from the N-terminus, the 303-residue chain is Acetyltransferase ataH (303 aa).

An N-terminal signal peptide occupies residues 1 to 23 (MPTTAAFLRALYILTTLRGIGTS). A run of 3 helical transmembrane segments spans residues 42-62 (FLLH…MMTF), 194-214 (LVFA…GIML), and 257-277 (GYIW…FPLF).

It belongs to the wax synthase family.

It is found in the membrane. It functions in the pathway mycotoxin biosynthesis. In terms of biological role, acetyltransferase; part of the gene cluster that mediates the biosynthesis of acetylaranotin, a member of the epipolythiodioxopiperazine (ETP) class of toxins characterized by a disulfide-bridged cyclic dipeptide. The first step of acetylaranotin biosynthesis is performed by the NRPS ataP which produces diketopiperazine cyclo-L-Phe-L-Phe via the condensation of 2 phenylalanines (L-Phe). The ataC domain of ataTC then catalyzes the formation of bishydroxylation of cyclo-L-Phe-L-Phe. The glutathione S-transferase domain ataG in ataIMG further catalyzes the conjugation of two glutathiones to the bishydroxylated intermediate. Next, the dipeptidase ataJ removes the Glu residues. The following step is performed by the carbon sulfur lyase domain ataI of ataIMG which may convert the bis-cysteinyl adduct to yield an epidithiol intermediate. The ataT domain from ataTC then catalyzes the oxidation of the free dithiols, followed by a cyclization step catalyzed by the cytochrome P450 ataF. AtaF probably acts as an epoxidase to promote a dual epoxidation formation at C8 and C9 along with C8' and C9', followed by the spontaneous nucleophilic attack of the amide nitrogens N10 and N10' to yield an intermediate with the pyrrolidine partial structure. The final steps of acetylaranotin biosynthesis involve the acetylation and ring rearrangement of an epitetrathiodiketopiperazine intermediate to produce acetylaranotin. AtaH probably catalyzes the acetylation of epitetrathiodiketopiperazine to produce a diacetate and ataY is responsible for the formation of the dihydrooxepin moiety that converts the diacetate intermediate to acetylaranotin via acetylapoaranotin. Both enzymes could function independently in the absence of the other. The acetylaranotin bis-thiomethyltransferase ataS located outside of acetylaranotin gene cluster is the main thiomethyltransferase responsible for converting acetylaranotin and its related intermediates to their methylated forms. The polypeptide is Acetyltransferase ataH (Aspergillus terreus (strain NIH 2624 / FGSC A1156)).